Reading from the N-terminus, the 246-residue chain is Ureidoacrylate amidohydrolase RutB (246 aa).

Residues 1 to 27 form a disordered region; that stretch reads MSAVTAAGYQAPQERSQSVTLPARPEP. The active-site Proton acceptor is D41. K150 is an active-site residue. C183 (nucleophile) is an active-site residue.

Belongs to the isochorismatase family. RutB subfamily.

It carries out the reaction (Z)-3-ureidoacrylate + H2O + H(+) = (Z)-3-aminoacrylate + NH4(+) + CO2. It catalyses the reaction (Z)-3-ureidoacrylate + H2O = (Z)-3-aminoacrylate + carbamate + H(+). The catalysed reaction is (Z)-2-methylureidoacrylate + H2O + H(+) = (Z)-2-methylaminoacrylate + NH4(+) + CO2. In terms of biological role, hydrolyzes ureidoacrylate to form aminoacrylate and carbamate. The carbamate hydrolyzes spontaneously, thereby releasing one of the nitrogen atoms of the pyrimidine ring as ammonia and one of its carbon atoms as CO2. The sequence is that of Ureidoacrylate amidohydrolase RutB from Rhizobium rhizogenes (strain K84 / ATCC BAA-868) (Agrobacterium radiobacter).